Here is a 748-residue protein sequence, read N- to C-terminus: Ribonucleoprotein PTB-binding 1 (748 aa).

Residues 1-42 form a disordered region; the sequence is MAADVSVTHRPPLSPEAEAEAETPETVDRRTPEQELPPLDPE. N-acetylalanine is present on A2. S6 and S14 each carry phosphoserine. T31 is modified (phosphothreonine). The Nuclear localization signal signature appears at 45–60; it reads RKRLEHTERQFRNRRK. RRM domains are found at residues 59-130, 132-210, and 221-299; these read RKIL…LQPT, ALLC…WTDA, and RCLC…FCAP. The segment at 307 to 401 is interaction with PTBP1; that stretch reads LAALIAAQAT…QSQSQKKPGI (95 aa). Disordered regions lie at residues 390 to 505, 525 to 647, and 672 to 731; these read QSQS…GEPP, SNLA…PLSH, and KAVG…QHSQ. T469 carries the phosphothreonine modification. 4 positions are modified to phosphoserine: S480, S576, S626, and S630. Residues 675–685 are compositionally biased toward low complexity; sequence GSSPMGSSEGL. 2 positions are modified to phosphoserine: S716 and S720. Residues 743–746 carry the Nuclear localization signal motif; the sequence is KRKR.

As to quaternary structure, interacts with PTBP1, RAVER2, VCL and ACTN1. Part of a complex containing RAVER1, VCL and ACTN1. As to expression, ubiquitous. Detected in aorta, brain, gut, heart, kidney, liver, spleen, uterus and skeletal muscle.

It localises to the nucleus. The protein localises to the cytoplasm. In terms of biological role, cooperates with PTBP1 to modulate regulated alternative splicing events. Promotes exon skipping. Cooperates with PTBP1 to modulate switching between mutually exclusive exons during maturation of the TPM1 pre-mRNA. The chain is Ribonucleoprotein PTB-binding 1 (Raver1) from Rattus norvegicus (Rat).